Here is a 385-residue protein sequence, read N- to C-terminus: UPF0284 protein PMT9312_0438 (385 aa).

Belongs to the UPF0284 family.

In Prochlorococcus marinus (strain MIT 9312), this protein is UPF0284 protein PMT9312_0438.